The chain runs to 262 residues: Hydroxyethylthiazole kinase (262 aa).

A substrate-binding site is contributed by methionine 50. Positions 125 and 171 each coordinate ATP. Glycine 198 provides a ligand contact to substrate.

The protein belongs to the Thz kinase family. The cofactor is Mg(2+).

It carries out the reaction 5-(2-hydroxyethyl)-4-methylthiazole + ATP = 4-methyl-5-(2-phosphooxyethyl)-thiazole + ADP + H(+). Its pathway is cofactor biosynthesis; thiamine diphosphate biosynthesis; 4-methyl-5-(2-phosphoethyl)-thiazole from 5-(2-hydroxyethyl)-4-methylthiazole: step 1/1. Its function is as follows. Catalyzes the phosphorylation of the hydroxyl group of 4-methyl-5-beta-hydroxyethylthiazole (THZ). The polypeptide is Hydroxyethylthiazole kinase (Escherichia coli O157:H7).